Consider the following 163-residue polypeptide: uncharacterized protein (163 aa).

This is an uncharacterized protein from Shigella flexneri.